The sequence spans 368 residues: Glucose 1-dehydrogenase 2 (368 aa).

C41 contacts Zn(2+). Residue T43 participates in substrate binding. Zn(2+) is bound by residues H68 and E69. A substrate-binding site is contributed by N91. Residues C95, C98, C101, C109, and Q152 each contribute to the Zn(2+) site. 2 residues coordinate substrate: Q152 and D156. Residues 213–215, 279–281, 307–309, and K356 contribute to the NADP(+) site; these read NRR, FGF, and LDN. A substrate-binding site is contributed by N309.

The protein belongs to the zinc-containing alcohol dehydrogenase family. Glucose 1-dehydrogenase subfamily. Requires Zn(2+) as cofactor.

The enzyme catalyses D-glucose + NAD(+) = D-glucono-1,5-lactone + NADH + H(+). It carries out the reaction D-glucose + NADP(+) = D-glucono-1,5-lactone + NADPH + H(+). Its function is as follows. Catalyzes the NAD(P)(+)-dependent oxidation of D-glucose to D-gluconate via gluconolactone. Can utilize both NAD(+) and NADP(+) as electron acceptor. Is involved in the degradation of glucose through a non-phosphorylative variant of the Entner-Doudoroff pathway. In Saccharolobus solfataricus (strain ATCC 35092 / DSM 1617 / JCM 11322 / P2) (Sulfolobus solfataricus), this protein is Glucose 1-dehydrogenase 2.